The sequence spans 144 residues: L-fucose mutarotase (144 aa).

H22 serves as the catalytic Proton donor. Residues D30, R109, and 131 to 133 (YGN) each bind substrate.

The protein belongs to the RbsD / FucU family. FucU mutarotase subfamily. Homodecamer.

It localises to the cytoplasm. It catalyses the reaction alpha-L-fucose = beta-L-fucose. It participates in carbohydrate metabolism; L-fucose metabolism. Functionally, involved in the anomeric conversion of L-fucose. The polypeptide is L-fucose mutarotase (Histophilus somni (strain 2336) (Haemophilus somnus)).